The following is a 138-amino-acid chain: Small ribosomal subunit protein uS12 (138 aa).

A disordered region spans residues 33–55; it reads KEHTNVSSPQKRGVCTRVGTMTP. Aspartate 102 is modified (3-methylthioaspartic acid).

This sequence belongs to the universal ribosomal protein uS12 family. In terms of assembly, part of the 30S ribosomal subunit. Contacts proteins S8 and S17. May interact with IF1 in the 30S initiation complex.

In terms of biological role, with S4 and S5 plays an important role in translational accuracy. Functionally, interacts with and stabilizes bases of the 16S rRNA that are involved in tRNA selection in the A site and with the mRNA backbone. Located at the interface of the 30S and 50S subunits, it traverses the body of the 30S subunit contacting proteins on the other side and probably holding the rRNA structure together. The combined cluster of proteins S8, S12 and S17 appears to hold together the shoulder and platform of the 30S subunit. This Bacillus licheniformis (strain ATCC 14580 / DSM 13 / JCM 2505 / CCUG 7422 / NBRC 12200 / NCIMB 9375 / NCTC 10341 / NRRL NRS-1264 / Gibson 46) protein is Small ribosomal subunit protein uS12.